The sequence spans 327 residues: Putative gluconeogenesis factor (327 aa).

It belongs to the gluconeogenesis factor family.

It localises to the cytoplasm. Required for morphogenesis under gluconeogenic growth conditions. In Lactococcus lactis subsp. lactis (strain IL1403) (Streptococcus lactis), this protein is Putative gluconeogenesis factor (yjiF).